The primary structure comprises 91 residues: MSRTVFCHYQQSDAEGLDFVPYPGELGQRIFVQIGKTAWQAWLAHQTMLINENRLSPRDPKHRAFLEAELQKFLFERNADKPEGYVAPVRD.

It belongs to the Fe(2+)-trafficking protein family.

In terms of biological role, could be a mediator in iron transactions between iron acquisition and iron-requiring processes, such as synthesis and/or repair of Fe-S clusters in biosynthetic enzymes. This is Probable Fe(2+)-trafficking protein from Xanthomonas euvesicatoria pv. vesicatoria (strain 85-10) (Xanthomonas campestris pv. vesicatoria).